A 382-amino-acid chain; its full sequence is Queuine tRNA-ribosyltransferase (382 aa).

The Proton acceptor role is filled by Asp93. Substrate-binding positions include 93–97, Asp147, Gln191, and Gly218; that span reads DSGGF. The segment at 249–255 is RNA binding; the sequence is GVGKPED. Asp268 serves as the catalytic Nucleophile. The segment at 273-277 is RNA binding; important for wobble base 34 recognition; the sequence is TRNAR. The Zn(2+) site is built by Cys306, Cys308, Cys311, and His337.

It belongs to the queuine tRNA-ribosyltransferase family. As to quaternary structure, homodimer. Within each dimer, one monomer is responsible for RNA recognition and catalysis, while the other monomer binds to the replacement base PreQ1. Zn(2+) serves as cofactor.

It carries out the reaction 7-aminomethyl-7-carbaguanine + guanosine(34) in tRNA = 7-aminomethyl-7-carbaguanosine(34) in tRNA + guanine. It participates in tRNA modification; tRNA-queuosine biosynthesis. Functionally, catalyzes the base-exchange of a guanine (G) residue with the queuine precursor 7-aminomethyl-7-deazaguanine (PreQ1) at position 34 (anticodon wobble position) in tRNAs with GU(N) anticodons (tRNA-Asp, -Asn, -His and -Tyr). Catalysis occurs through a double-displacement mechanism. The nucleophile active site attacks the C1' of nucleotide 34 to detach the guanine base from the RNA, forming a covalent enzyme-RNA intermediate. The proton acceptor active site deprotonates the incoming PreQ1, allowing a nucleophilic attack on the C1' of the ribose to form the product. After dissociation, two additional enzymatic reactions on the tRNA convert PreQ1 to queuine (Q), resulting in the hypermodified nucleoside queuosine (7-(((4,5-cis-dihydroxy-2-cyclopenten-1-yl)amino)methyl)-7-deazaguanosine). This is Queuine tRNA-ribosyltransferase from Haemophilus influenzae (strain PittEE).